We begin with the raw amino-acid sequence, 466 residues long: 3-isopropylmalate dehydratase large subunit (466 aa).

Residues C347, C408, and C411 each coordinate [4Fe-4S] cluster.

Belongs to the aconitase/IPM isomerase family. LeuC type 1 subfamily. Heterodimer of LeuC and LeuD. [4Fe-4S] cluster is required as a cofactor.

The catalysed reaction is (2R,3S)-3-isopropylmalate = (2S)-2-isopropylmalate. It participates in amino-acid biosynthesis; L-leucine biosynthesis; L-leucine from 3-methyl-2-oxobutanoate: step 2/4. Functionally, catalyzes the isomerization between 2-isopropylmalate and 3-isopropylmalate, via the formation of 2-isopropylmaleate. The protein is 3-isopropylmalate dehydratase large subunit of Herminiimonas arsenicoxydans.